We begin with the raw amino-acid sequence, 430 residues long: Adenylosuccinate synthetase (430 aa).

GTP-binding positions include 12–18 (GDEGKGK) and 40–42 (GHT). Asp-13 serves as the catalytic Proton acceptor. Mg(2+) contacts are provided by Asp-13 and Gly-40. IMP-binding positions include 13–16 (DEGK), 38–41 (NAGH), Thr-128, Arg-142, Gln-223, Thr-238, and Arg-302. His-41 acts as the Proton donor in catalysis. 298–304 (TTTGRPR) is a binding site for substrate. Residues Arg-304, 330–332 (SID), and 412–414 (SVG) each bind GTP.

The protein belongs to the adenylosuccinate synthetase family. Homodimer. The cofactor is Mg(2+).

It localises to the cytoplasm. The enzyme catalyses IMP + L-aspartate + GTP = N(6)-(1,2-dicarboxyethyl)-AMP + GDP + phosphate + 2 H(+). It functions in the pathway purine metabolism; AMP biosynthesis via de novo pathway; AMP from IMP: step 1/2. Plays an important role in the de novo pathway of purine nucleotide biosynthesis. Catalyzes the first committed step in the biosynthesis of AMP from IMP. The sequence is that of Adenylosuccinate synthetase from Streptococcus pyogenes serotype M12 (strain MGAS9429).